Reading from the N-terminus, the 495-residue chain is Cysteine--tRNA ligase (495 aa).

C29 provides a ligand contact to Zn(2+). The 'HIGH' region signature appears at 31 to 41; the sequence is PTVYDYGHIGN. The Zn(2+) site is built by C211, H236, and E240. Positions 268–272 match the 'KMSKS' region motif; the sequence is KMSKS. K271 is an ATP binding site.

Belongs to the class-I aminoacyl-tRNA synthetase family. In terms of assembly, monomer. It depends on Zn(2+) as a cofactor.

It localises to the cytoplasm. It catalyses the reaction tRNA(Cys) + L-cysteine + ATP = L-cysteinyl-tRNA(Cys) + AMP + diphosphate. In Koribacter versatilis (strain Ellin345), this protein is Cysteine--tRNA ligase.